The primary structure comprises 395 residues: Multidrug resistance protein MdtL (395 aa).

The next 12 membrane-spanning stretches (helical) occupy residues 4 to 24, 42 to 62, 69 to 89, 93 to 113, 131 to 151, 158 to 178, 217 to 237, 247 to 267, 271 to 291, 295 to 315, 333 to 353, and 358 to 378; these read FLLCSFALVLLYPAGIDMYLV, IAFSVYLAGMATAMLFAGKIA, PVAIVGALVFMMASLLCSRAS, LFLSGRFLQGVGAGGCYVVAF, LLNGITCIVPVLAPVVGHLIM, SLFYTMSAMGIIVGLLSLFIL, VSVILTFVNASPVLLMEVMGF, ALTAGVSMVVSFSTPFALGLF, TLMLVSQGLFLTAGVTLSLAH, VTLFGLTLICAGFSVGFGVAM, LGIAQVCGSSLWIWLAAILGI, and MLIGILIGCSIVSILLIFSVA.

The protein belongs to the major facilitator superfamily. DHA1 family. MdtL (TC 2.A.1.2.22) subfamily.

It is found in the cell inner membrane. This Salmonella agona (strain SL483) protein is Multidrug resistance protein MdtL.